Here is a 1175-residue protein sequence, read N- to C-terminus: Solute carrier family 9 member C1 (1175 aa).

Residues 1 to 39 (MEMEEISENLTASHSIKLTNMWLELLKSVFLSTPQDLPE) lie on the Extracellular side of the membrane. Residues 40–59 (IILILSLICTVGAFLNMHLK) traverse the membrane as a helical segment. Over 60 to 64 (DFPIP) the chain is Cytoplasmic. The helical transmembrane segment at 65–82 (LPVILFLIGCCFEILSFA) threads the bilayer. At 83 to 98 (STQIQIYADAIQWMDP) the chain is on the extracellular side. A helical transmembrane segment spans residues 99–115 (DIFFGIFTPVIIFNVAF). Over 116 to 125 (DMDIYMLQKL) the chain is Cytoplasmic. A helical membrane pass occupies residues 126–151 (FWQILVITIPGFLINYTLILWYLQSV). The transport core domain stretch occupies residues 126–213 (FWQILVITIP…SLVIYSGVVH (88 aa)). Residues 152-157 (NKLSLK) lie on the Extracellular side of the membrane. The helical transmembrane segment at 158–183 (TVPWLLFSAVLISSDPMLTSASIRDL) threads the bilayer. The Cytoplasmic segment spans residues 184–186 (GLS). The chain crosses the membrane as a helical span at residues 187 to 212 (RSLTNLINGESLLTSVLSLVIYSGVV). Topologically, residues 213–225 (HIRFKSKSVNHTL) are extracellular. A helical transmembrane segment spans residues 226–257 (AHKVMSTAWSYIVESFITGIVFTKVIQLWMAT). The Cytoplasmic segment spans residues 258 to 261 (IFGD). The helical transmembrane segment at 262-283 (DVNHITLIFSVLYLIFYVCELV) threads the bilayer. The Extracellular portion of the chain corresponds to 284–286 (GMS). Residues 287-300 (GIFTLATIGLFLNS) traverse the membrane as a helical segment. At 301–307 (TSFKPGV) the chain is on the cytoplasmic side. The chain crosses the membrane as a helical span at residues 308-339 (EAFLLEFWNCLSFIGFLMVFTFIGLLIPAHTY). The Extracellular segment spans residues 340–344 (LHISF). The chain crosses the membrane as a helical span at residues 345–374 (SDVYYSLNIYFTLIVLRLLVFLLMSPILSR). Positions 345–446 (SDVYYSLNIY…FILPMAVTKL (102 aa)) are transport core domain. At 375–380 (LGHGFS) the chain is on the cytoplasmic side. Residues 381 to 411 (WRWAFIMVWSEMKGTPNINMALLLAYSDISL) form a helical membrane-spanning segment. At 412–415 (GSER) the chain is on the extracellular side. A helical transmembrane segment spans residues 416 to 446 (ERSQILFHGVSVCVITLIVNRFILPMAVTKL). The Cytoplasmic portion of the chain corresponds to 447–632 (GLRDVTSTKY…ACHRIVFTNE (186 aa)). An ion transport-like region spans residues 618-698 (YMFLHACHRI…EFFSHTWLLF (81 aa)). The chain crosses the membrane as a helical span at residues 633 to 653 (FEYTGYLVVLMSTYPMIICWI). Over 654–657 (SRLK) the chain is Extracellular. The helical transmembrane segment at 658–684 (DIYDNEIKCANYYFLAFYILEALLKVA) threads the bilayer. The Cytoplasmic portion of the chain corresponds to 685 to 691 (AMRKEFF). Residues 692-716 (SHTWLLFELGITLVGVLDIILIETD) traverse the membrane as a helical segment. Residues 717 to 724 (SISYNFDL) lie on the Extracellular side of the membrane. Residues 725-751 (TETVVFMNVIRLLRILRILKLVTPKLL) traverse the membrane as a helical segment. Residues 752-1175 (QIIDKRMSQQ…EELIEENINI (424 aa)) lie on the Cytoplasmic side of the membrane. The segment covering 1137–1146 (MKPDSERESF) has biased composition (basic and acidic residues). The disordered stretch occupies residues 1137-1175 (MKPDSERESFETLDETSEEDNGKKENQENEELIEENINI). Positions 1164 to 1175 (ENEELIEENINI) are enriched in acidic residues.

The protein belongs to the monovalent cation:proton antiporter 1 (CPA1) transporter (TC 2.A.36) family. As to quaternary structure, interacts with soluble adenylyl cyclase (sAC). In terms of tissue distribution, testis-specific. Specifically present in the principal piece of sperm tail (at protein level).

Its subcellular location is the cell projection. It localises to the cilium. The protein localises to the flagellum membrane. Its function is as follows. Sperm-specific solute carrier involved in intracellular pH regulation of spermatozoa. Required for sperm motility and fertility. Involved in sperm cell hyperactivation, a step needed for sperm motility which is essential late in the preparation of sperm for fertilization. Required for the expression and bicarbonate regulation of the soluble adenylyl cyclase (sAC). The sequence is that of Solute carrier family 9 member C1 (Slc9c1) from Mus musculus (Mouse).